Reading from the N-terminus, the 93-residue chain is Large ribosomal subunit protein uL23 (93 aa).

The protein belongs to the universal ribosomal protein uL23 family. Part of the 50S ribosomal subunit. Contacts protein L29, and trigger factor when it is bound to the ribosome.

One of the early assembly proteins it binds 23S rRNA. One of the proteins that surrounds the polypeptide exit tunnel on the outside of the ribosome. Forms the main docking site for trigger factor binding to the ribosome. The chain is Large ribosomal subunit protein uL23 from Aliarcobacter butzleri (strain RM4018) (Arcobacter butzleri).